Reading from the N-terminus, the 208-residue chain is Sodium/potassium-transporting ATPase subunit beta-1-interacting protein 2 (208 aa).

A run of 4 helical transmembrane segments spans residues 1-23 (MGYCSGRCTLIFICGMQLVCVLE), 35-55 (APILANFVHIIIVILGLFGTI), 62-82 (ITGYAVWLVLWVTWNVFVICF), and 153-173 (LQIVLALAGFIYACYVVKCIT).

The protein belongs to the NKAIN family. As to quaternary structure, interacts with ATP1B1. As to expression, expressed in fetal brain. Weakly expressed in adult brain and thymus. Not expressed in any other normal tissue examined.

The protein localises to the cell membrane. This Homo sapiens (Human) protein is Sodium/potassium-transporting ATPase subunit beta-1-interacting protein 2 (NKAIN2).